Reading from the N-terminus, the 240-residue chain is DNA repair protein RecO (240 aa).

The protein belongs to the RecO family.

In terms of biological role, involved in DNA repair and RecF pathway recombination. This chain is DNA repair protein RecO, found in Wolbachia pipientis wMel.